The chain runs to 80 residues: Acyl carrier protein (80 aa).

In terms of domain architecture, Carrier spans 4–79 (EAILEKVRSI…DAVKYIEDKQ (76 aa)). Serine 39 is subject to O-(pantetheine 4'-phosphoryl)serine.

It belongs to the acyl carrier protein (ACP) family. In terms of processing, 4'-phosphopantetheine is transferred from CoA to a specific serine of apo-ACP by AcpS. This modification is essential for activity because fatty acids are bound in thioester linkage to the sulfhydryl of the prosthetic group.

The protein localises to the cytoplasm. It participates in lipid metabolism; fatty acid biosynthesis. Carrier of the growing fatty acid chain in fatty acid biosynthesis. In Prochlorococcus marinus (strain SARG / CCMP1375 / SS120), this protein is Acyl carrier protein.